The chain runs to 238 residues: Uridylate kinase (238 aa).

13-16 (KLSG) provides a ligand contact to ATP. A UMP-binding site is contributed by G53. Residues G54 and R58 each contribute to the ATP site. Residues D73 and 134–141 (AGLPYFST) contribute to the UMP site. ATP is bound by residues N162, Y168, and D171.

The protein belongs to the UMP kinase family. In terms of assembly, homohexamer.

The protein resides in the cytoplasm. The catalysed reaction is UMP + ATP = UDP + ADP. It functions in the pathway pyrimidine metabolism; CTP biosynthesis via de novo pathway; UDP from UMP (UMPK route): step 1/1. Its activity is regulated as follows. Inhibited by UTP. Its function is as follows. Catalyzes the reversible phosphorylation of UMP to UDP. The sequence is that of Uridylate kinase from Clavibacter michiganensis subsp. michiganensis (strain NCPPB 382).